The chain runs to 281 residues: MSEEIISFTNPALGPLPTKAPQLPSNVLDLFSLKGKVASVTGSSGGIGWAVAEAFAQAGADVAIWYNSKPADAKAEYLTEKYGVKAKAYKCNVTDPNDVSKVINEIEKDFGTIDIFVANAGVAWTDGPEIDVQGYDQWKKIVDCDLNGVYYCAHTVGQIFKKNKSGSLIITSSMSGTIVNIPQLQAPYNAAKAACTHLAKSLSVEWASFGARVNSISPGYILTDIADFADPEMKKKWWQLTPLGREGLPQELVGAYLYLASNASTYTTGSNIAVDGGYTCP.

NADP(+) contacts are provided by Ile-47, Lys-74, and Asn-119. Catalysis depends on proton donor residues Ser-173 and Tyr-188. NADP(+)-binding residues include Tyr-188, Lys-192, Ile-221, and Thr-223. Lys-192 functions as the Lowers pKa of active site Tyr in the catalytic mechanism.

This sequence belongs to the short-chain dehydrogenases/reductases (SDR) family. Homotetramer.

The enzyme catalyses D-sorbitol + NADP(+) = keto-L-sorbose + NADPH + H(+). It functions in the pathway carbohydrate degradation; L-sorbose degradation. Catalyzes the NADP dependent reduction of L-sorbose to D-glucitol. Can also convert fructose to mannitol, but less efficiently. The sequence is that of Sorbose reductase SOU1 (SOU1) from Candida albicans (strain SC5314 / ATCC MYA-2876) (Yeast).